Consider the following 121-residue polypeptide: SLLEFGKMILEETGKLAIPSYSSYGCYCGWGGKGTPKDATDRCCFVHDCCYGNLPDCNPKSDRYKYKRVNGAIVCEKGTSCENRICECDKAAAICFRQNLNTYSKKYMLYPDFLCKGELKC.

Cystine bridges form between Cys-26–Cys-115, Cys-28–Cys-44, Cys-43–Cys-95, Cys-49–Cys-121, Cys-50–Cys-88, Cys-57–Cys-81, and Cys-75–Cys-86. The Ca(2+) site is built by Tyr-27, Gly-29, and Gly-31. The active site involves His-47. Asp-48 serves as a coordination point for Ca(2+). Asp-89 is an active-site residue.

The protein belongs to the phospholipase A2 family. Group II subfamily. D49 sub-subfamily. As to quaternary structure, monomer. Ca(2+) serves as cofactor. As to expression, expressed by the venom gland.

Its subcellular location is the secreted. The catalysed reaction is a 1,2-diacyl-sn-glycero-3-phosphocholine + H2O = a 1-acyl-sn-glycero-3-phosphocholine + a fatty acid + H(+). With respect to regulation, oxyphenbutazone (OPB), anisic acid and atropine inhibit the enzymatic activity by binding at the substrate-binding site. P-coumaric acid, resveratrol, spermidine, corticosterone and gramine derivative inhibit the enzymatic activity by binding at the substrate-binding site. In terms of biological role, snake venom phospholipase A2 (PLA2) that shows weak neurotoxicity and medium anticoagulant effects by binding to factor Xa (F10) and inhibiting the prothrombinase activity (IC(50) is 130 nM). It also damages vital organs such as lung, liver and kidney, displays edema-inducing activities when injected into the foot pads of mice and induces necrosis of muscle cells when injected into the thigh muscle. Has a low enzymatic activity. PLA2 catalyzes the calcium-dependent hydrolysis of the 2-acyl groups in 3-sn-phosphoglycerides. In Daboia russelii (Russel's viper), this protein is Basic phospholipase A2 VRV-PL-VIIIa.